The primary structure comprises 248 residues: 5'-nucleotidase SurE (248 aa).

Residues aspartate 8, aspartate 9, serine 39, and asparagine 92 each contribute to the a divalent metal cation site.

It belongs to the SurE nucleotidase family. It depends on a divalent metal cation as a cofactor.

The protein resides in the cytoplasm. The catalysed reaction is a ribonucleoside 5'-phosphate + H2O = a ribonucleoside + phosphate. Functionally, nucleotidase that shows phosphatase activity on nucleoside 5'-monophosphates. The sequence is that of 5'-nucleotidase SurE from Tolumonas auensis (strain DSM 9187 / NBRC 110442 / TA 4).